A 492-amino-acid polypeptide reads, in one-letter code: Probable beta-1,4-xylosyltransferase IRX14H (492 aa).

The Cytoplasmic segment spans residues 1–33; the sequence is MKLSVFRLSYWNRRGSSFRSSPSLDPSFDGKSP. A helical; Signal-anchor for type II membrane protein transmembrane segment spans residues 34-54; it reads SSVFWFVIHGLCCLISLILGF. Topologically, residues 55–492 are lumenal; that stretch reads RFSHLVLFFL…FDGVKVSATS (438 aa). 3 N-linked (GlcNAc...) asparagine glycosylation sites follow: Asn-99, Asn-196, and Asn-314. The disordered stretch occupies residues 457–492; that stretch reads IKEAKSNSKPRVSKSKSYKEKQEPKAFDGVKVSATS. The segment covering 473–484 has biased composition (basic and acidic residues); that stretch reads SYKEKQEPKAFD.

This sequence belongs to the glycosyltransferase 43 family. As to expression, expressed in developing interfascicular fibers and xylem cells in stems and developing secondary xylem in roots.

It localises to the golgi apparatus membrane. Its function is as follows. Involved in the synthesis of the hemicellulose glucuronoxylan, a major component of secondary cell walls. Probably involved in the elongation of glucuronoxylan xylosyl backbone. This is Probable beta-1,4-xylosyltransferase IRX14H (IRX14H) from Arabidopsis thaliana (Mouse-ear cress).